Reading from the N-terminus, the 362-residue chain is Erythritol/L-threitol dehydrogenase (362 aa).

Positions 45, 76, 77, 109, 112, 115, and 123 each coordinate Zn(2+). 2 residues coordinate NAD(+): Ile-195 and Asp-215.

It belongs to the zinc-containing alcohol dehydrogenase family. Zn(2+) serves as cofactor.

It catalyses the reaction erythritol + NAD(+) = D-erythrulose + NADH + H(+). It carries out the reaction L-threitol + NAD(+) = L-erythrulose + NADH + H(+). The protein operates within carbohydrate metabolism; erythritol degradation. It participates in carbohydrate metabolism; L-threitol degradation. Functionally, catalyzes the NAD-dependent reversible oxidation of erythritol and L-threitol. Involved in the degradation pathways of erythritol and L-threitol, that allow M.smegmatis to grow on these compounds as the sole carbon source. The chain is Erythritol/L-threitol dehydrogenase from Mycolicibacterium smegmatis (strain ATCC 700084 / mc(2)155) (Mycobacterium smegmatis).